An 89-amino-acid chain; its full sequence is uncharacterized protein (89 aa).

This sequence to B.licheniformis xpaF1 and to B.subtilis XhlA.

This is an uncharacterized protein from Bacillus licheniformis.